Reading from the N-terminus, the 197-residue chain is Imidazoleglycerol-phosphate dehydratase (197 aa).

The protein belongs to the imidazoleglycerol-phosphate dehydratase family.

Its subcellular location is the cytoplasm. The catalysed reaction is D-erythro-1-(imidazol-4-yl)glycerol 3-phosphate = 3-(imidazol-4-yl)-2-oxopropyl phosphate + H2O. It functions in the pathway amino-acid biosynthesis; L-histidine biosynthesis; L-histidine from 5-phospho-alpha-D-ribose 1-diphosphate: step 6/9. The protein is Imidazoleglycerol-phosphate dehydratase of Stutzerimonas stutzeri (strain A1501) (Pseudomonas stutzeri).